The following is a 451-amino-acid chain: tRNA-2-methylthio-N(6)-dimethylallyladenosine synthase (451 aa).

The MTTase N-terminal domain occupies 5–121 (RQYHITTFGC…LQDLLEQVEG (117 aa)). Residues Cys-14, Cys-50, Cys-84, Cys-156, Cys-160, and Cys-163 each coordinate [4Fe-4S] cluster. Residues 142–379 (RDSTVTAWVN…NHLVAQKAAE (238 aa)) enclose the Radical SAM core domain. The region spanning 382-446 (QRYAGRIEEV…AFSLTGEAVE (65 aa)) is the TRAM domain.

This sequence belongs to the methylthiotransferase family. MiaB subfamily. In terms of assembly, monomer. [4Fe-4S] cluster serves as cofactor.

It localises to the cytoplasm. The enzyme catalyses N(6)-dimethylallyladenosine(37) in tRNA + (sulfur carrier)-SH + AH2 + 2 S-adenosyl-L-methionine = 2-methylsulfanyl-N(6)-dimethylallyladenosine(37) in tRNA + (sulfur carrier)-H + 5'-deoxyadenosine + L-methionine + A + S-adenosyl-L-homocysteine + 2 H(+). Its function is as follows. Catalyzes the methylthiolation of N6-(dimethylallyl)adenosine (i(6)A), leading to the formation of 2-methylthio-N6-(dimethylallyl)adenosine (ms(2)i(6)A) at position 37 in tRNAs that read codons beginning with uridine. The polypeptide is tRNA-2-methylthio-N(6)-dimethylallyladenosine synthase (Picosynechococcus sp. (strain ATCC 27264 / PCC 7002 / PR-6) (Agmenellum quadruplicatum)).